We begin with the raw amino-acid sequence, 178 residues long: UPF0302 protein BcerKBAB4_1445 (178 aa).

Belongs to the UPF0302 family.

This chain is UPF0302 protein BcerKBAB4_1445, found in Bacillus mycoides (strain KBAB4) (Bacillus weihenstephanensis).